Consider the following 223-residue polypeptide: Thiamine-phosphate synthase (223 aa).

4-amino-2-methyl-5-(diphosphooxymethyl)pyrimidine-binding positions include 37–41 and Asp72; that span reads QFREK. 2 residues coordinate Mg(2+): Asp73 and Asp92. Ser110 serves as a coordination point for 4-amino-2-methyl-5-(diphosphooxymethyl)pyrimidine. Residue 136–138 participates in 2-[(2R,5Z)-2-carboxy-4-methylthiazol-5(2H)-ylidene]ethyl phosphate binding; the sequence is TQS. Position 139 (Lys139) interacts with 4-amino-2-methyl-5-(diphosphooxymethyl)pyrimidine. Residues Gly168 and 188–189 contribute to the 2-[(2R,5Z)-2-carboxy-4-methylthiazol-5(2H)-ylidene]ethyl phosphate site; that span reads IS.

The protein belongs to the thiamine-phosphate synthase family. Mg(2+) is required as a cofactor.

It catalyses the reaction 2-[(2R,5Z)-2-carboxy-4-methylthiazol-5(2H)-ylidene]ethyl phosphate + 4-amino-2-methyl-5-(diphosphooxymethyl)pyrimidine + 2 H(+) = thiamine phosphate + CO2 + diphosphate. The enzyme catalyses 2-(2-carboxy-4-methylthiazol-5-yl)ethyl phosphate + 4-amino-2-methyl-5-(diphosphooxymethyl)pyrimidine + 2 H(+) = thiamine phosphate + CO2 + diphosphate. The catalysed reaction is 4-methyl-5-(2-phosphooxyethyl)-thiazole + 4-amino-2-methyl-5-(diphosphooxymethyl)pyrimidine + H(+) = thiamine phosphate + diphosphate. It functions in the pathway cofactor biosynthesis; thiamine diphosphate biosynthesis; thiamine phosphate from 4-amino-2-methyl-5-diphosphomethylpyrimidine and 4-methyl-5-(2-phosphoethyl)-thiazole: step 1/1. Condenses 4-methyl-5-(beta-hydroxyethyl)thiazole monophosphate (THZ-P) and 2-methyl-4-amino-5-hydroxymethyl pyrimidine pyrophosphate (HMP-PP) to form thiamine monophosphate (TMP). The chain is Thiamine-phosphate synthase from Streptococcus agalactiae serotype III (strain NEM316).